The primary structure comprises 930 residues: Dual serine/threonine and tyrosine protein kinase (930 aa).

The segment covering 1-14 (MEGDGVPWGSEPVS) has biased composition (low complexity). The tract at residues 1-22 (MEGDGVPWGSEPVSGPGPGGGG) is disordered. 2 coiled-coil regions span residues 190 to 216 (EEDL…MHHA) and 396 to 432 (RKKE…KEEL). Residues 653–907 (PKLGQELGRG…PLLGIVQPML (255 aa)) enclose the Protein kinase domain. ATP contacts are provided by residues 659–667 (LGRGQYGVV) and Lys682. Residue Asp778 is the Proton acceptor of the active site.

Belongs to the protein kinase superfamily. Ser/Thr protein kinase family.

It localises to the cytoplasm. Its subcellular location is the cell membrane. It is found in the apical cell membrane. The protein resides in the basolateral cell membrane. The protein localises to the cell junction. It carries out the reaction L-seryl-[protein] + ATP = O-phospho-L-seryl-[protein] + ADP + H(+). It catalyses the reaction L-threonyl-[protein] + ATP = O-phospho-L-threonyl-[protein] + ADP + H(+). The enzyme catalyses L-tyrosyl-[protein] + ATP = O-phospho-L-tyrosyl-[protein] + ADP + H(+). Functionally, acts as a positive regulator of ERK phosphorylation downstream of fibroblast growth factor-receptor activation. Involved in the regulation of both caspase-dependent apoptosis and caspase-independent cell death. In the skin, it plays a predominant role in suppressing caspase-dependent apoptosis in response to UV stress in a range of dermal cell types. This is Dual serine/threonine and tyrosine protein kinase (DSTYK) from Pan troglodytes (Chimpanzee).